The following is a 206-amino-acid chain: MAKGLIGKKVGMSQIFDEQGNIIPVTVLEVGPCAVSQVKSVENDGYEAIQLAFQDTKEFQISKAEKNHLAKASLGPKKVLREFRSFGDSPATGSVLKVQDIFAVSDVVKVTGVSKGRGFQGVVKRHGHAGGPGGHGSRFHRHPGSMGANSTPSRVFKGVKLPGRTGSQQTTVRNLKVVRINEEKNLVFVSGAVPGTTNTVITIEKI.

The disordered stretch occupies residues 122-154 (VVKRHGHAGGPGGHGSRFHRHPGSMGANSTPSR).

Belongs to the universal ribosomal protein uL3 family. In terms of assembly, part of the 50S ribosomal subunit. Forms a cluster with proteins L14 and L19.

One of the primary rRNA binding proteins, it binds directly near the 3'-end of the 23S rRNA, where it nucleates assembly of the 50S subunit. In Leptospira borgpetersenii serovar Hardjo-bovis (strain JB197), this protein is Large ribosomal subunit protein uL3.